Reading from the N-terminus, the 765-residue chain is Periplasmic beta-glucosidase (765 aa).

Residues 1 to 20 form the signal peptide; that stretch reads MKWLCSVGVAVSLAMQPALA. Residue D287 is part of the active site.

Belongs to the glycosyl hydrolase 3 family.

It localises to the periplasm. The catalysed reaction is Hydrolysis of terminal, non-reducing beta-D-glucosyl residues with release of beta-D-glucose.. This Salmonella typhimurium (strain LT2 / SGSC1412 / ATCC 700720) protein is Periplasmic beta-glucosidase (bglX).